The sequence spans 218 residues: Leucine-rich repeat protein 1 (218 aa).

The N-terminal stretch at 1–27 is a signal peptide; it reads MASRNYRWELFAASLTLTLALIHLVEA. LRR repeat units follow at residues 94 to 117, 119 to 140, 141 to 165, and 167 to 190; these read EHLQ…LGNL, NLIS…SLGK, LKSL…LTAI, and SLKV…PFAH.

As to quaternary structure, interacts with HIR1.

Its function is as follows. Involved in plant defense response. This Arabidopsis thaliana (Mouse-ear cress) protein is Leucine-rich repeat protein 1.